Consider the following 178-residue polypeptide: ATP synthase subunit delta (178 aa).

This sequence belongs to the ATPase delta chain family. In terms of assembly, F-type ATPases have 2 components, F(1) - the catalytic core - and F(0) - the membrane proton channel. F(1) has five subunits: alpha(3), beta(3), gamma(1), delta(1), epsilon(1). F(0) has three main subunits: a(1), b(2) and c(10-14). The alpha and beta chains form an alternating ring which encloses part of the gamma chain. F(1) is attached to F(0) by a central stalk formed by the gamma and epsilon chains, while a peripheral stalk is formed by the delta and b chains.

The protein localises to the cell inner membrane. F(1)F(0) ATP synthase produces ATP from ADP in the presence of a proton or sodium gradient. F-type ATPases consist of two structural domains, F(1) containing the extramembraneous catalytic core and F(0) containing the membrane proton channel, linked together by a central stalk and a peripheral stalk. During catalysis, ATP synthesis in the catalytic domain of F(1) is coupled via a rotary mechanism of the central stalk subunits to proton translocation. Functionally, this protein is part of the stalk that links CF(0) to CF(1). It either transmits conformational changes from CF(0) to CF(1) or is implicated in proton conduction. In Hydrogenovibrio crunogenus (strain DSM 25203 / XCL-2) (Thiomicrospira crunogena), this protein is ATP synthase subunit delta.